A 545-amino-acid chain; its full sequence is Carboxypeptidase N subunit 2 (545 aa).

A signal peptide spans 1–21; that stretch reads MLPGAWLLWTSLLLLARPAQP. Positions 22–49 constitute an LRRNT domain; the sequence is CPMGCDCFVQEVFCSDEELATVPLDIPP. N-linked (GlcNAc...) asparagine glycans are attached at residues asparagine 74, asparagine 111, and asparagine 119. 12 LRR repeats span residues 98–119, 122–143, 146–167, 170–191, 194–215, 218–239, 242–263, 266–287, 290–311, 314–335, 338–359, and 362–383; these read RLED…IFSN, SLGK…LFQH, ALES…LFQP, HLKT…LFHP, SLQT…VFGK, SLQE…VFSQ, CLER…IFAS, NLTF…LFAH, CLVG…TFAH, NLRS…IFRD, ELVK…LFQN, and KLEL…IFDT. N-linked (GlcNAc...) asparagine glycosylation occurs at asparagine 228. Residue asparagine 266 is glycosylated (N-linked (GlcNAc...) asparagine). Asparagine 348 and asparagine 359 each carry an N-linked (GlcNAc...) asparagine glycan. In terms of domain architecture, LRRCT spans 395-447; it reads NPWQCDCHLAYLFNWLQQYTDRLLNIQTYCAGPAYLKGQVVPALNEKQLVCPV. An N-linked (GlcNAc...) asparagine glycan is attached at asparagine 518.

Tetramer of two catalytic chains and two glycosylated inactive chains. Whether or not any Cys residues participate in intrachain bonds is unknown, but they do not form interchain disulfide bonds with the 50 kDa catalytic subunit.

Its subcellular location is the secreted. Functionally, the 83 kDa subunit binds and stabilizes the catalytic subunit at 37 degrees Celsius and keeps it in circulation. Under some circumstances it may be an allosteric modifier of the catalytic subunit. The chain is Carboxypeptidase N subunit 2 (CPN2) from Homo sapiens (Human).